The primary structure comprises 364 residues: Phosphoserine aminotransferase (364 aa).

R46 is a binding site for L-glutamate. Pyridoxal 5'-phosphate contacts are provided by residues 80-81 (AR), W106, T157, D176, and Q199. Residue K200 is modified to N6-(pyridoxal phosphate)lysine. 241–242 (NT) lines the pyridoxal 5'-phosphate pocket.

It belongs to the class-V pyridoxal-phosphate-dependent aminotransferase family. SerC subfamily. In terms of assembly, homodimer. It depends on pyridoxal 5'-phosphate as a cofactor.

Its subcellular location is the cytoplasm. The enzyme catalyses O-phospho-L-serine + 2-oxoglutarate = 3-phosphooxypyruvate + L-glutamate. It catalyses the reaction 4-(phosphooxy)-L-threonine + 2-oxoglutarate = (R)-3-hydroxy-2-oxo-4-phosphooxybutanoate + L-glutamate. It functions in the pathway amino-acid biosynthesis; L-serine biosynthesis; L-serine from 3-phospho-D-glycerate: step 2/3. The protein operates within cofactor biosynthesis; pyridoxine 5'-phosphate biosynthesis; pyridoxine 5'-phosphate from D-erythrose 4-phosphate: step 3/5. In terms of biological role, catalyzes the reversible conversion of 3-phosphohydroxypyruvate to phosphoserine and of 3-hydroxy-2-oxo-4-phosphonooxybutanoate to phosphohydroxythreonine. This chain is Phosphoserine aminotransferase, found in Vibrio parahaemolyticus serotype O3:K6 (strain RIMD 2210633).